The sequence spans 716 residues: Fatty acid oxidation complex subunit alpha (716 aa).

The interval 1 to 189 is enoyl-CoA hydratase/isomerase; it reads MIYQSPTIQV…KVGAVDAVVA (189 aa). A substrate-binding site is contributed by Asp-296. Residues 311–716 are 3-hydroxyacyl-CoA dehydrogenase; it reads KDVKSAAVLG…AANNGSYYQA (406 aa). NAD(+) is bound by residues Met-324, Asp-343, 400 to 402, Lys-407, and Ser-429; that span reads VVE. His-450 (for 3-hydroxyacyl-CoA dehydrogenase activity) is an active-site residue. Residue Asn-453 coordinates NAD(+). Residues Asn-500 and Tyr-660 each contribute to the substrate site.

This sequence in the N-terminal section; belongs to the enoyl-CoA hydratase/isomerase family. In the C-terminal section; belongs to the 3-hydroxyacyl-CoA dehydrogenase family. As to quaternary structure, heterotetramer of two alpha chains (FadB) and two beta chains (FadA).

It catalyses the reaction a (3S)-3-hydroxyacyl-CoA + NAD(+) = a 3-oxoacyl-CoA + NADH + H(+). It carries out the reaction a (3S)-3-hydroxyacyl-CoA = a (2E)-enoyl-CoA + H2O. The enzyme catalyses a 4-saturated-(3S)-3-hydroxyacyl-CoA = a (3E)-enoyl-CoA + H2O. The catalysed reaction is (3S)-3-hydroxybutanoyl-CoA = (3R)-3-hydroxybutanoyl-CoA. It catalyses the reaction a (3Z)-enoyl-CoA = a 4-saturated (2E)-enoyl-CoA. It carries out the reaction a (3E)-enoyl-CoA = a 4-saturated (2E)-enoyl-CoA. The protein operates within lipid metabolism; fatty acid beta-oxidation. Its function is as follows. Involved in the aerobic and anaerobic degradation of long-chain fatty acids via beta-oxidation cycle. Catalyzes the formation of 3-oxoacyl-CoA from enoyl-CoA via L-3-hydroxyacyl-CoA. It can also use D-3-hydroxyacyl-CoA and cis-3-enoyl-CoA as substrate. The sequence is that of Fatty acid oxidation complex subunit alpha from Shewanella sp. (strain MR-7).